The chain runs to 141 residues: ATP synthase epsilon chain, chloroplastic (141 aa).

It belongs to the ATPase epsilon chain family. F-type ATPases have 2 components, F(1) - the catalytic core - and F(0) - the membrane proton channel. F(1) has five subunits: alpha(3), beta(3), gamma(1), delta(1), epsilon(1). F(0) has four main subunits: a(1), b(1), b'(1) and c(10-14). The alpha and beta chains form an alternating ring which encloses part of the gamma chain. F(1) is attached to F(0) by a central stalk formed by the gamma and epsilon chains, while a peripheral stalk is formed by the delta, b and b' chains.

It localises to the plastid. The protein resides in the chloroplast thylakoid membrane. F(1)F(0) ATP synthase produces ATP from ADP in the presence of a proton or sodium gradient. F-type ATPases consist of two structural domains, F(1) containing the extramembraneous catalytic core and F(0) containing the membrane proton channel, linked together by a central stalk and a peripheral stalk. During catalysis, ATP synthesis in the catalytic domain of F(1) is coupled via a rotary mechanism of the central stalk subunits to proton translocation. The protein is ATP synthase epsilon chain, chloroplastic of Chlamydomonas reinhardtii (Chlamydomonas smithii).